Reading from the N-terminus, the 187-residue chain is Orotate phosphoribosyltransferase (187 aa).

Residues R103, K104, K107, and 129–137 (EDVTTSGGS) each bind 5-phospho-alpha-D-ribose 1-diphosphate. Orotate is bound by residues T133 and R161.

The protein belongs to the purine/pyrimidine phosphoribosyltransferase family. PyrE subfamily. As to quaternary structure, homodimer. Mg(2+) serves as cofactor.

The catalysed reaction is orotidine 5'-phosphate + diphosphate = orotate + 5-phospho-alpha-D-ribose 1-diphosphate. It functions in the pathway pyrimidine metabolism; UMP biosynthesis via de novo pathway; UMP from orotate: step 1/2. In terms of biological role, catalyzes the transfer of a ribosyl phosphate group from 5-phosphoribose 1-diphosphate to orotate, leading to the formation of orotidine monophosphate (OMP). The chain is Orotate phosphoribosyltransferase from Methanosarcina mazei (strain ATCC BAA-159 / DSM 3647 / Goe1 / Go1 / JCM 11833 / OCM 88) (Methanosarcina frisia).